Here is a 579-residue protein sequence, read N- to C-terminus: Glypican-3 (579 aa).

Positions 1–24 are cleaved as a signal peptide; sequence MAGTVRTACLLVAMLLGLGCLGQA. Residue Gln25 is modified to Pyrrolidone carboxylic acid. 7 disulfides stabilise this stretch: Cys34–Cys71, Cys64–Cys261, Cys72–Cys264, Cys196–Cys348, Cys251–Cys284, Cys273–Cys421, and Cys277–Cys409. Asn123 and Asn240 each carry an N-linked (GlcNAc...) asparagine glycan. The residue at position 351 (Ser351) is a Phosphoserine. Asn417 carries N-linked (GlcNAc...) asparagine glycosylation. Residues Ser494 and Ser508 are each glycosylated (O-linked (Xyl...) (glycosaminoglycan) serine). The segment at 533 to 552 is disordered; sequence DAPGNKQHGNQKDNEITTSH. Residue Ser553 is the site of GPI-anchor amidated serine attachment. Residues 554-579 constitute a propeptide, removed in mature form; the sequence is VGNMPSPLKILISVAIYVACFFFLVH.

The protein belongs to the glypican family. As to quaternary structure, heterodimer; disulfide-linked. Cleavage by a furin-like convertase results in production of alpha and beta chains which form a disulfide-linked heterodimer. Interacts with DPP4. Interacts with FGF2. Interacts with WNT5A. Also interacts with WNT3A and WNT7B. Interacts with hedgehog protein SHH; the heparan sulfate chains are not required for the interaction. Also interacts with hedgehog protein IHH. Interacts with CD81. Interacts with Wnt receptors FZD4, FZD7 and FZD8; the heparan sulfate chains are required for the interaction. In terms of processing, O-glycosylated; contains heparan sulfate and/or chondroitin sulfate. Post-translationally, cleaved intracellularly by a furin-like convertase to generate 2 subunits, alpha and beta, which remain associated through disulfide bonds and are associated with the cell surface via the GPI-anchor. This processing is essential for its role in inhibition of hedgehog signaling. A second proteolytic event may result in cleavage of the protein on the cell surface, separating it from the GPI-anchor and leading to its shedding from the cell surface. In terms of tissue distribution, in the developing limb, absent from the apical epidermal ridge at 11 dpc but highly expressed in the underlying mesenchyme. Expression in the mesenchyme at this stage is asymmetric with highest levels in the regions of the distal mesenchyme within the progress zone and within the proximal anterior and posterior limb bud. At later developmental stages including 12.5 and 13.5 dpc, expression is restricted to the interdigital webs and the regions of chondrocytic differentiation of the developing bones. In the embryonic kidney, expressed in both the ureteric bud and mesenchymal cells as early as 13.5 dpc. Expression at 16.5 dpc is similar to that at 13.5 dpc but decreases by 18.5 dpc.

The protein localises to the cell membrane. Cell surface proteoglycan. Negatively regulates the hedgehog signaling pathway when attached via the GPI-anchor to the cell surface by competing with the hedgehog receptor PTC1 for binding to hedgehog proteins. Binding to the hedgehog protein SHH triggers internalization of the complex by endocytosis and its subsequent lysosomal degradation. Positively regulates the canonical Wnt signaling pathway by binding to the Wnt receptor Frizzled and stimulating the binding of the Frizzled receptor to Wnt ligands. Positively regulates the non-canonical Wnt signaling pathway. Binds to CD81 which decreases the availability of free CD81 for binding to the transcriptional repressor HHEX, resulting in nuclear translocation of HHEX and transcriptional repression. Inhibits the dipeptidyl peptidase activity of DPP4. Plays a role in limb patterning and skeletal development by controlling the cellular response to BMP4. Modulates the effects of growth factors BMP2, BMP7 and FGF7 on renal branching morphogenesis. Required for coronary vascular development. Plays a role in regulating cell movements during gastrulation. This is Glypican-3 (Gpc3) from Mus musculus (Mouse).